We begin with the raw amino-acid sequence, 343 residues long: MAKRQLNRRQNWRIEKIQGERAARAAKRESSAVEALEGGDLGPEQTGLVIAHFGVQVEVEALEGELAGSVSRCHLRANLPALVTGDKVVWRAGNQGIGVIVAQLPRTTELRRPDSRGQLKPVAANVDMIVIVFAPLPEPHANLIDRYLVAAEHAGIRPLLLLNKFDLIDEQNAPALNALLAVYRTLGYPVLEVSAHHGNGMEQLQQQLDGRISVFVGQSGVGKSSLVNSLLPEVDTRVGPLSELSGQGTHTTTTARLFHFPGGGELIDSPGIREFGLGHVSRSDVEAGFIEFNDLIGTCRFRDCKHDREPGCALLKALEDGRVQQQRMNSYRSIIASLPESSY.

Positions 116 to 275 constitute a CP-type G domain; that stretch reads RGQLKPVAAN…LIDSPGIREF (160 aa). Residues 163–166 and 217–225 contribute to the GTP site; these read NKFD and GQSGVGKSS. Zn(2+) is bound by residues Cys-299, Cys-304, His-306, and Cys-312.

It belongs to the TRAFAC class YlqF/YawG GTPase family. RsgA subfamily. Monomer. Associates with 30S ribosomal subunit, binds 16S rRNA. It depends on Zn(2+) as a cofactor.

The protein localises to the cytoplasm. In terms of biological role, one of several proteins that assist in the late maturation steps of the functional core of the 30S ribosomal subunit. Helps release RbfA from mature subunits. May play a role in the assembly of ribosomal proteins into the subunit. Circularly permuted GTPase that catalyzes slow GTP hydrolysis, GTPase activity is stimulated by the 30S ribosomal subunit. In Pseudomonas fluorescens (strain SBW25), this protein is Small ribosomal subunit biogenesis GTPase RsgA.